The chain runs to 246 residues: Acetoacetate decarboxylase (246 aa).

Residue lysine 116 is the Schiff-base intermediate with acetoacetate of the active site.

This sequence belongs to the ADC family.

It catalyses the reaction acetoacetate + H(+) = acetone + CO2. Its function is as follows. Catalyzes the conversion of acetoacetate to acetone and carbon dioxide. The chain is Acetoacetate decarboxylase from Bordetella avium (strain 197N).